The following is a 361-amino-acid chain: Peptidyl-prolyl cis-trans isomerase CYP40 (361 aa).

Residues 7–172 (FMDISIGGEL…QDVVIHDCGE (166 aa)) enclose the PPIase cyclophilin-type domain. 2 TPR repeats span residues 212–245 (VDFV…LDIC) and 298–331 (VKAL…EPND).

This sequence belongs to the cyclophilin-type PPIase family. Expressed at low levels in seedlings, roots, shoots, leaves, stems, inflorescences, flowers and siliques, with highest levels dividing tissues.

It localises to the cytoplasm. The catalysed reaction is [protein]-peptidylproline (omega=180) = [protein]-peptidylproline (omega=0). Binds cyclosporin A (CsA). CsA mediates some of its effects via an inhibitory action on PPIase. Functionally, PPIases accelerate the folding of proteins. It catalyzes the cis-trans isomerization of proline imidic peptide bonds in oligopeptides. Involved in promoting the expression of the juvenile phase of vegetative development, and, to a lower extent, in regulating the positioning of floral buds, floral morphogenesis and the expression of HSPs. Collaboratively with RBL and ULT1, influences floral meristem (FM) determinacy in an AGAMOUS and SUPERMAN-dependent manner, thus contributing to the floral developmental homeostasis. This Arabidopsis thaliana (Mouse-ear cress) protein is Peptidyl-prolyl cis-trans isomerase CYP40.